The chain runs to 81 residues: Small ribosomal subunit protein uS17 (81 aa).

Belongs to the universal ribosomal protein uS17 family. Part of the 30S ribosomal subunit.

Functionally, one of the primary rRNA binding proteins, it binds specifically to the 5'-end of 16S ribosomal RNA. The chain is Small ribosomal subunit protein uS17 from Methylocella silvestris (strain DSM 15510 / CIP 108128 / LMG 27833 / NCIMB 13906 / BL2).